The following is a 184-amino-acid chain: Ras-related protein Rap-1b-like protein (184 aa).

10-18 (GSRGVGKSA) lines the GTP pocket. Positions 32 to 40 (YDPTIEDSY) match the Effector region motif. GTP-binding positions include 57-61 (DTAGT), 116-119 (NKCD), and 147-149 (SAK). A lipid anchor (S-geranylgeranyl cysteine) is attached at Cys181. A propeptide spans 182-184 (QLL) (removed in mature form).

The protein belongs to the small GTPase superfamily. Ras family.

It localises to the cell membrane. It is found in the cytoplasm. Its subcellular location is the cytosol. The catalysed reaction is GTP + H2O = GDP + phosphate + H(+). Probable GTP-binding protein with intrinsic GTPase activity. The polypeptide is Ras-related protein Rap-1b-like protein (Homo sapiens (Human)).